Consider the following 824-residue polypeptide: Leucine--tRNA ligase (824 aa).

The 'HIGH' region motif lies at 41–51 (PYPSGTLHVGH). Positions 580–584 (KMSKS) match the 'KMSKS' region motif. An ATP-binding site is contributed by K583.

It belongs to the class-I aminoacyl-tRNA synthetase family.

The protein localises to the cytoplasm. It catalyses the reaction tRNA(Leu) + L-leucine + ATP = L-leucyl-tRNA(Leu) + AMP + diphosphate. This chain is Leucine--tRNA ligase, found in Thermotoga maritima (strain ATCC 43589 / DSM 3109 / JCM 10099 / NBRC 100826 / MSB8).